A 75-amino-acid chain; its full sequence is Small ribosomal subunit protein bS18 (75 aa).

The protein belongs to the bacterial ribosomal protein bS18 family. Part of the 30S ribosomal subunit. Forms a tight heterodimer with protein bS6.

In terms of biological role, binds as a heterodimer with protein bS6 to the central domain of the 16S rRNA, where it helps stabilize the platform of the 30S subunit. The protein is Small ribosomal subunit protein bS18 of Cereibacter sphaeroides (strain ATCC 17029 / ATH 2.4.9) (Rhodobacter sphaeroides).